Consider the following 103-residue polypeptide: Large ribosomal subunit protein bL21 (103 aa).

Belongs to the bacterial ribosomal protein bL21 family. As to quaternary structure, part of the 50S ribosomal subunit. Contacts protein L20.

This protein binds to 23S rRNA in the presence of protein L20. The polypeptide is Large ribosomal subunit protein bL21 (Clostridium botulinum (strain Alaska E43 / Type E3)).